A 223-amino-acid chain; its full sequence is Ribosomal RNA small subunit methyltransferase G (223 aa).

Gly-85, Phe-90, and Arg-154 together coordinate S-adenosyl-L-methionine.

Belongs to the methyltransferase superfamily. RNA methyltransferase RsmG family.

The protein resides in the cytoplasm. It carries out the reaction guanosine(527) in 16S rRNA + S-adenosyl-L-methionine = N(7)-methylguanosine(527) in 16S rRNA + S-adenosyl-L-homocysteine. In terms of biological role, specifically methylates the N7 position of guanine in position 527 of 16S rRNA. This is Ribosomal RNA small subunit methyltransferase G from Rhodopseudomonas palustris (strain ATCC BAA-98 / CGA009).